The following is a 285-amino-acid chain: Shikimate dehydrogenase (NADP(+)) (285 aa).

Shikimate contacts are provided by residues 19-21 (SLS) and Thr66. Residue Lys70 is the Proton acceptor of the active site. Shikimate-binding residues include Asn91 and Asp107. Residues 129–133 (GSGGA) and Leu228 contribute to the NADP(+) site. Tyr230 provides a ligand contact to shikimate. Gly251 is a binding site for NADP(+).

The protein belongs to the shikimate dehydrogenase family. Homodimer.

The catalysed reaction is shikimate + NADP(+) = 3-dehydroshikimate + NADPH + H(+). Its pathway is metabolic intermediate biosynthesis; chorismate biosynthesis; chorismate from D-erythrose 4-phosphate and phosphoenolpyruvate: step 4/7. Functionally, involved in the biosynthesis of the chorismate, which leads to the biosynthesis of aromatic amino acids. Catalyzes the reversible NADPH linked reduction of 3-dehydroshikimate (DHSA) to yield shikimate (SA). The polypeptide is Shikimate dehydrogenase (NADP(+)) (Prochlorococcus marinus (strain MIT 9515)).